Reading from the N-terminus, the 1269-residue chain is Protein strawberry notch homolog 1 (1269 aa).

Residues 21 to 47 (NDLFDVDGGDAGLATPTPPSVQQQQPP) are disordered. Lysine 113 carries the post-translational modification N6-acetyllysine. Phosphoserine occurs at positions 126 and 178. The residue at position 377 (lysine 377) is an N6-acetyllysine. The interval 652–725 (PSNNSSPRDS…SLITSQDAVE (74 aa)) is disordered. Phosphoserine occurs at positions 656, 657, and 661. Residues 679 to 693 (SGSESDVSDNEESDY) show a composition bias toward acidic residues. A phosphoserine mark is found at serine 700 and serine 701. Positions 719–746 (TSQDAVERAQQMKKDLLDKLEKLAEDLP) form a coiled coil. An N6-acetyllysine modification is found at lysine 1098. Position 1262 is a phosphoserine (serine 1262).

This sequence belongs to the SBNO family.

It is found in the nucleus. In terms of biological role, plays a crucial role in the regulation of neural stem cells (NSCs) proliferation. Enhances the phosphorylation of GSK3B through the PI3K-Akt signaling pathway, thereby upregulating the Wnt/beta-catenin signaling pathway and promoting the proliferation of NSCs. Improves ischemic stroke recovery while inhibiting neuroinflammation through small extracellular vesicles (sEVs)-mediated mechanism. Enhances the secretion of sEVs from NSCs, which in turn inhibit both the MAPK and NF-kappaB pathways in microglia. This inhibition suppresses the pro-inflammatory M1 polarization of microglia, promoting a shift towards the M2 anti-inflammatory phenotype, which is beneficial for reducing neuroinflammation. The polypeptide is Protein strawberry notch homolog 1 (Sbno1) (Rattus norvegicus (Rat)).